Reading from the N-terminus, the 204-residue chain is 34 kDa membrane antigen (204 aa).

The first 19 residues, 1-19, serve as a signal peptide directing secretion; the sequence is MKRVSLLGSAAIFALVFSA. A lipid anchor (N-palmitoyl cysteine) is attached at Cys-20. A lipid anchor (S-diacylglycerol cysteine) is attached at Cys-20.

The protein belongs to the UPF0423 family.

It is found in the cell membrane. Functionally, this antigen is a pathogen-specific membrane immunogen. The chain is 34 kDa membrane antigen (tpd) from Treponema pallidum (strain Nichols).